The following is a 274-amino-acid chain: MRRVALKIAYIGSNFHGYQRQPNYRTVEGELLRVFKETNIIEDTWTAHYSVAGRTDKGVHSTGNVISFITDEDIHINQLNGLLPDDIKIIGEARVPYGFKVRFPLTRTYTYIQPISPFEKKNLDITKMHVAMESFIGKHNFRNFSKRNEKNPNRKIIDVNLEVDEDVLIFTIVGESFLWNMVRKMVTSIMEVGYGKLDINDINELLKPKELRQFIRLQPAPANGLILSDMEYKNIKFKDSEYAKNKLVEFLKKEYMLHEQEKKADCRLIKILKK.

The active-site Nucleophile is D56. Residue Y109 participates in substrate binding.

It belongs to the tRNA pseudouridine synthase TruA family.

The enzyme catalyses uridine(38/39/40) in tRNA = pseudouridine(38/39/40) in tRNA. Formation of pseudouridine at positions 38, 39 and 40 in the anticodon stem and loop of transfer RNAs. This chain is tRNA pseudouridine synthase A, found in Methanosphaera stadtmanae (strain ATCC 43021 / DSM 3091 / JCM 11832 / MCB-3).